A 227-amino-acid chain; its full sequence is Ribosomal RNA large subunit methyltransferase E (227 aa).

S-adenosyl-L-methionine contacts are provided by G78, W80, D103, D119, and D143. K183 serves as the catalytic Proton acceptor.

It belongs to the class I-like SAM-binding methyltransferase superfamily. RNA methyltransferase RlmE family.

It localises to the cytoplasm. The catalysed reaction is uridine(2552) in 23S rRNA + S-adenosyl-L-methionine = 2'-O-methyluridine(2552) in 23S rRNA + S-adenosyl-L-homocysteine + H(+). Its function is as follows. Specifically methylates the uridine in position 2552 of 23S rRNA at the 2'-O position of the ribose in the fully assembled 50S ribosomal subunit. The sequence is that of Ribosomal RNA large subunit methyltransferase E from Rickettsia africae (strain ESF-5).